A 625-amino-acid chain; its full sequence is Chaperone protein HtpG (625 aa).

An a; substrate-binding region spans residues 1–337; the sequence is MNIQKKEVYS…SNNLPLNVSR (337 aa). The segment at 338-552 is b; the sequence is EILQDNSITQ…SNEMSTQMAK (215 aa). A c region spans residues 553 to 625; sequence LFSAAGQSVP…ARTNKLILEQ (73 aa).

Belongs to the heat shock protein 90 family. As to quaternary structure, homodimer.

It is found in the cytoplasm. Its function is as follows. Molecular chaperone. Has ATPase activity. In Buchnera aphidicola subsp. Schizaphis graminum (strain Sg), this protein is Chaperone protein HtpG.